Reading from the N-terminus, the 624-residue chain is tRNA uridine 5-carboxymethylaminomethyl modification enzyme MnmG (624 aa).

Residues 13-18, Val-125, and Ser-180 each bind FAD; that span reads GGGHAG. 273–287 lines the NAD(+) pocket; that stretch reads GPRYCPSIEDKIVRF. Position 370 (Gln-370) interacts with FAD.

This sequence belongs to the MnmG family. In terms of assembly, homodimer. Heterotetramer of two MnmE and two MnmG subunits. FAD is required as a cofactor.

The protein localises to the cytoplasm. In terms of biological role, NAD-binding protein involved in the addition of a carboxymethylaminomethyl (cmnm) group at the wobble position (U34) of certain tRNAs, forming tRNA-cmnm(5)s(2)U34. In Legionella pneumophila (strain Lens), this protein is tRNA uridine 5-carboxymethylaminomethyl modification enzyme MnmG.